An 81-amino-acid chain; its full sequence is Acyl carrier protein (81 aa).

Positions 4–79 constitute a Carrier domain; it reads AEIKDKVYDI…QAIDYIVNKK (76 aa). Position 39 is an O-(pantetheine 4'-phosphoryl)serine (Ser-39).

The protein belongs to the acyl carrier protein (ACP) family. In terms of processing, 4'-phosphopantetheine is transferred from CoA to a specific serine of apo-ACP by AcpS. This modification is essential for activity because fatty acids are bound in thioester linkage to the sulfhydryl of the prosthetic group.

It localises to the cytoplasm. It participates in lipid metabolism; fatty acid biosynthesis. In terms of biological role, carrier of the growing fatty acid chain in fatty acid biosynthesis. The chain is Acyl carrier protein from Chlorobaculum tepidum (strain ATCC 49652 / DSM 12025 / NBRC 103806 / TLS) (Chlorobium tepidum).